A 427-amino-acid chain; its full sequence is Glutamate-1-semialdehyde 2,1-aminomutase (427 aa).

The residue at position 267 (K267) is an N6-(pyridoxal phosphate)lysine.

The protein belongs to the class-III pyridoxal-phosphate-dependent aminotransferase family. HemL subfamily. Homodimer. The cofactor is pyridoxal 5'-phosphate.

Its subcellular location is the cytoplasm. The catalysed reaction is (S)-4-amino-5-oxopentanoate = 5-aminolevulinate. The protein operates within porphyrin-containing compound metabolism; protoporphyrin-IX biosynthesis; 5-aminolevulinate from L-glutamyl-tRNA(Glu): step 2/2. The protein is Glutamate-1-semialdehyde 2,1-aminomutase of Sulfurihydrogenibium azorense (strain DSM 15241 / OCM 825 / Az-Fu1).